We begin with the raw amino-acid sequence, 510 residues long: GMP synthase [glutamine-hydrolyzing] (510 aa).

Residues 5–195 (KILVLDFGGQ…LFKVCGVKGT (191 aa)) form the Glutamine amidotransferase type-1 domain. Cysteine 82 serves as the catalytic Nucleophile. Catalysis depends on residues histidine 169 and glutamate 171. One can recognise a GMPS ATP-PPase domain in the interval 196 to 385 (WNMADFINEE…LGLPDEIVWR (190 aa)). 223-229 (SGGVDSA) contributes to the ATP binding site.

As to quaternary structure, homodimer.

It catalyses the reaction XMP + L-glutamine + ATP + H2O = GMP + L-glutamate + AMP + diphosphate + 2 H(+). It participates in purine metabolism; GMP biosynthesis; GMP from XMP (L-Gln route): step 1/1. Functionally, catalyzes the synthesis of GMP from XMP. The sequence is that of GMP synthase [glutamine-hydrolyzing] from Halothermothrix orenii (strain H 168 / OCM 544 / DSM 9562).